Here is a 402-residue protein sequence, read N- to C-terminus: D-mannonate dehydratase (402 aa).

2 residues coordinate substrate: N37 and H122. Residue Y159 is the Proton donor/acceptor of the active site. A Mg(2+)-binding site is contributed by D210. H212 acts as the Proton donor/acceptor in catalysis. Mg(2+)-binding residues include E236 and E262. Substrate is bound by residues E262, R283, H312, D316, and E339.

It belongs to the mandelate racemase/muconate lactonizing enzyme family. GalD subfamily. It depends on Mg(2+) as a cofactor.

The enzyme catalyses D-mannonate = 2-dehydro-3-deoxy-D-gluconate + H2O. It functions in the pathway carbohydrate metabolism; pentose and glucuronate interconversion. Catalyzes the dehydration of D-mannonate. Has no detectable activity with a panel of 70 other acid sugars (in vitro). The polypeptide is D-mannonate dehydratase (Rhizorhabdus wittichii (strain DSM 6014 / CCUG 31198 / JCM 15750 / NBRC 105917 / EY 4224 / RW1) (Sphingomonas wittichii)).